The primary structure comprises 408 residues: Na(+)-translocating NADH-quinone reductase subunit F (408 aa).

Residues 6 to 26 form a helical membrane-spanning segment; it reads IILGVVMFTAIVLALVAIILA. The 2Fe-2S ferredoxin-type domain occupies 35–127; that stretch reads GDVTIRINGE…DMDVEVPEEV (93 aa). [2Fe-2S] cluster is bound by residues Cys70, Cys76, Cys79, and Cys111. In terms of domain architecture, FAD-binding FR-type spans 130–270; it reads VKAWECTVES…YGPFGEFFAK (141 aa).

It belongs to the NqrF family. Composed of six subunits; NqrA, NqrB, NqrC, NqrD, NqrE and NqrF. Requires [2Fe-2S] cluster as cofactor. FAD is required as a cofactor.

The protein localises to the cell inner membrane. It carries out the reaction a ubiquinone + n Na(+)(in) + NADH + H(+) = a ubiquinol + n Na(+)(out) + NAD(+). Functionally, NQR complex catalyzes the reduction of ubiquinone-1 to ubiquinol by two successive reactions, coupled with the transport of Na(+) ions from the cytoplasm to the periplasm. The first step is catalyzed by NqrF, which accepts electrons from NADH and reduces ubiquinone-1 to ubisemiquinone by a one-electron transfer pathway. In Marinomonas sp. (strain MWYL1), this protein is Na(+)-translocating NADH-quinone reductase subunit F.